The sequence spans 154 residues: Pro-corazonin (154 aa).

Positions 1–19 are cleaved as a signal peptide; that stretch reads MLRLLLLPLFLFTLSMCMG. Pyrrolidone carboxylic acid is present on glutamine 20. Asparagine 30 carries the post-translational modification Asparagine amide. Residues 70-154 constitute a propeptide that is removed on maturation; sequence LERCLSQLQR…SAEPNVFGKH (85 aa). The segment at 91–119 is disordered; sequence DFNANRVDPDPENSAHPRLSNSNGENVLY. The span at 109–119 shows a compositional bias: polar residues; the sequence is LSNSNGENVLY.

It belongs to the corazonin family. As to expression, from late embryo to larva, expression is consistently detected in three neuronal groups: dorso-lateral neurons (DL), dorso-medial neurons (DM), and neurons in the ventral nerve cord (vCrz). Both the vCrz and DM groups die via programmed cell death during metamorphosis, whereas the DL neurons persist to adulthood. In adults, expression is seen in a cluster of six to eight neurons per lobe in the pars lateralis (DLP), in numerous neuronal cells in the optic lobes, and in a novel group of four abdominal ganglionic neurons present only in males (ms-aCrz). Projections of the ms-aCrz neurons terminate within the ventral nerve cord, implying a role as interneurons. Terminals of the DLP neurons are found in the retrocerebral complex that produces juvenile hormone and adipokinetic hormone, located in the vicinity of terminals emanating from PDF-containing pacemaking neurons.

Its subcellular location is the secreted. Cardioactive peptide. Corazonin is probably involved in the physiological regulation of the heart beat. Clock (Clk) and cycle (cyc) proteins negatively regulate Crz transcription in a cell-specific manner. This chain is Pro-corazonin (Crz), found in Drosophila melanogaster (Fruit fly).